The sequence spans 197 residues: Pyridoxal 5'-phosphate synthase subunit PdxT (197 aa).

Position 54–56 (54–56 (GES)) interacts with L-glutamine. Catalysis depends on Cys-86, which acts as the Nucleophile. L-glutamine contacts are provided by residues Arg-113 and 141–142 (IR). Residues His-177 and Glu-179 each act as charge relay system in the active site.

The protein belongs to the glutaminase PdxT/SNO family. In terms of assembly, in the presence of PdxS, forms a dodecamer of heterodimers. Only shows activity in the heterodimer.

It catalyses the reaction aldehydo-D-ribose 5-phosphate + D-glyceraldehyde 3-phosphate + L-glutamine = pyridoxal 5'-phosphate + L-glutamate + phosphate + 3 H2O + H(+). The enzyme catalyses L-glutamine + H2O = L-glutamate + NH4(+). It functions in the pathway cofactor biosynthesis; pyridoxal 5'-phosphate biosynthesis. In terms of biological role, catalyzes the hydrolysis of glutamine to glutamate and ammonia as part of the biosynthesis of pyridoxal 5'-phosphate. The resulting ammonia molecule is channeled to the active site of PdxS. This Haloarcula marismortui (strain ATCC 43049 / DSM 3752 / JCM 8966 / VKM B-1809) (Halobacterium marismortui) protein is Pyridoxal 5'-phosphate synthase subunit PdxT.